The chain runs to 123 residues: Galanin peptides (123 aa).

A signal peptide spans 1–19 (MARGSALLLASLLLAAALS). The propeptide occupies 20–30 (ASAGLWSPAKE). A disordered region spans residues 46-80 (HAVGNHRSFSDKNGLTSKRELRPEDDMKPGSFDRS). Residues 62–73 (SKRELRPEDDMK) are compositionally biased toward basic and acidic residues. S116 and S117 each carry phosphoserine.

This sequence belongs to the galanin family.

The protein localises to the secreted. Functionally, endocrine hormone of the central and peripheral nervous systems that binds and activates the G protein-coupled receptors GALR1, GALR2, and GALR3. This small neuropeptide may regulate diverse physiologic functions including contraction of smooth muscle of the gastrointestinal and genitourinary tract, growth hormone and insulin release and adrenal secretion. This chain is Galanin peptides (GAL), found in Homo sapiens (Human).